We begin with the raw amino-acid sequence, 513 residues long: Sterol 14-alpha demethylase rstn2 (513 aa).

A helical transmembrane segment spans residues 3 to 23 (WPLIGAYALLAFVAIIALNVT). Cys453 contributes to the heme binding site.

This sequence belongs to the cytochrome P450 family. It depends on heme as a cofactor.

The protein resides in the membrane. The catalysed reaction is a 14alpha-methyl steroid + 3 reduced [NADPH--hemoprotein reductase] + 3 O2 = a Delta(14) steroid + formate + 3 oxidized [NADPH--hemoprotein reductase] + 4 H2O + 4 H(+). It catalyses the reaction a 14alpha-methyl steroid + reduced [NADPH--hemoprotein reductase] + O2 = a 14alpha-hydroxymethyl steroid + oxidized [NADPH--hemoprotein reductase] + H2O + H(+). It carries out the reaction a 14alpha-hydroxymethyl steroid + reduced [NADPH--hemoprotein reductase] + O2 = a 14alpha-formyl steroid + oxidized [NADPH--hemoprotein reductase] + 2 H2O + H(+). The enzyme catalyses a 14alpha-formyl steroid + reduced [NADPH--hemoprotein reductase] + O2 = a Delta(14) steroid + formate + oxidized [NADPH--hemoprotein reductase] + H2O + 2 H(+). The catalysed reaction is lanosterol + 3 reduced [NADPH--hemoprotein reductase] + 3 O2 = 4,4-dimethyl-5alpha-cholesta-8,14,24-trien-3beta-ol + formate + 3 oxidized [NADPH--hemoprotein reductase] + 4 H2O + 4 H(+). It catalyses the reaction lanosterol + reduced [NADPH--hemoprotein reductase] + O2 = 32-hydroxylanosterol + oxidized [NADPH--hemoprotein reductase] + H2O + H(+). It carries out the reaction 32-hydroxylanosterol + reduced [NADPH--hemoprotein reductase] + O2 = 32-oxolanosterol + oxidized [NADPH--hemoprotein reductase] + 2 H2O + H(+). The enzyme catalyses 32-oxolanosterol + reduced [NADPH--hemoprotein reductase] + O2 = 4,4-dimethyl-5alpha-cholesta-8,14,24-trien-3beta-ol + formate + oxidized [NADPH--hemoprotein reductase] + H2O + 2 H(+). The catalysed reaction is eburicol + 3 reduced [NADPH--hemoprotein reductase] + 3 O2 = 14-demethyleburicol + formate + 3 oxidized [NADPH--hemoprotein reductase] + 4 H2O + 4 H(+). It catalyses the reaction eburicol + reduced [NADPH--hemoprotein reductase] + O2 = 32-hydroxyeburicol + oxidized [NADPH--hemoprotein reductase] + H2O + H(+). It carries out the reaction 32-hydroxyeburicol + reduced [NADPH--hemoprotein reductase] + O2 = 32-oxoeburicol + oxidized [NADPH--hemoprotein reductase] + 2 H2O + H(+). The enzyme catalyses 32-oxoeburicol + reduced [NADPH--hemoprotein reductase] + O2 = 14-demethyleburicol + formate + oxidized [NADPH--hemoprotein reductase] + H2O + 2 H(+). It functions in the pathway steroid biosynthesis; sterol biosynthesis. In terms of biological role, sterol 14-alpha demethylase; part of the gene cluster that mediates the biosynthesis of the tetrahydropyranyl antifungal agent restricticin that acts as an inhibitor of CYP51 and blocks the ergosterol biosynthesis. Sterol 14-alpha-demethylase plays a critical role in the biosynthesis of ergosterol, the major sterol component in fungal membranes that participates in a variety of functions. Rtsn2 acts as a self-resistant CYP51 that contains mutations found in CYP51s isolated from azole resistance strains and that is not inhibited by the final product of the cluster, restricticin. The chain is Sterol 14-alpha demethylase rstn2 from Aspergillus nomiae NRRL (strain ATCC 15546 / NRRL 13137 / CBS 260.88 / M93).